The following is a 308-amino-acid chain: Acetaldehyde dehydrogenase (308 aa).

An NAD(+)-binding site is contributed by 10–13 (SGNI). The Acyl-thioester intermediate role is filled by Cys128. NAD(+)-binding positions include 159–167 (SAGPGTRAN) and Asn285.

It belongs to the acetaldehyde dehydrogenase family.

It catalyses the reaction acetaldehyde + NAD(+) + CoA = acetyl-CoA + NADH + H(+). The protein is Acetaldehyde dehydrogenase of Salinispora tropica (strain ATCC BAA-916 / DSM 44818 / JCM 13857 / NBRC 105044 / CNB-440).